The following is a 188-amino-acid chain: Putative glutamine amidotransferase-like protein YvdE homolog (188 aa).

Positions 17–188 constitute a Glutamine amidotransferase type-1 domain; that stretch reads SPFWWNKVSY…IKDLGQGLQA (172 aa).

In Lactococcus lactis subsp. cremoris (Streptococcus cremoris), this protein is Putative glutamine amidotransferase-like protein YvdE homolog.